The following is a 187-amino-acid chain: NADH-quinone oxidoreductase subunit B (187 aa).

Positions 55, 56, 121, and 150 each coordinate [4Fe-4S] cluster.

The protein belongs to the complex I 20 kDa subunit family. As to quaternary structure, NDH-1 is composed of 14 different subunits. Subunits NuoB, C, D, E, F, and G constitute the peripheral sector of the complex. It depends on [4Fe-4S] cluster as a cofactor.

Its subcellular location is the cell inner membrane. It catalyses the reaction a quinone + NADH + 5 H(+)(in) = a quinol + NAD(+) + 4 H(+)(out). In terms of biological role, NDH-1 shuttles electrons from NADH, via FMN and iron-sulfur (Fe-S) centers, to quinones in the respiratory chain. The immediate electron acceptor for the enzyme in this species is believed to be ubiquinone. Couples the redox reaction to proton translocation (for every two electrons transferred, four hydrogen ions are translocated across the cytoplasmic membrane), and thus conserves the redox energy in a proton gradient. The chain is NADH-quinone oxidoreductase subunit B from Bdellovibrio bacteriovorus (strain ATCC 15356 / DSM 50701 / NCIMB 9529 / HD100).